The chain runs to 321 residues: Homoserine O-succinyltransferase (321 aa).

The active-site Acyl-thioester intermediate is the C142. 2 residues coordinate substrate: K163 and S192. Catalysis depends on H235, which acts as the Proton acceptor. E237 is an active-site residue. Substrate is bound at residue R249.

This sequence belongs to the MetA family.

The protein localises to the cytoplasm. It catalyses the reaction L-homoserine + succinyl-CoA = O-succinyl-L-homoserine + CoA. The protein operates within amino-acid biosynthesis; L-methionine biosynthesis via de novo pathway; O-succinyl-L-homoserine from L-homoserine: step 1/1. Transfers a succinyl group from succinyl-CoA to L-homoserine, forming succinyl-L-homoserine. The sequence is that of Homoserine O-succinyltransferase from Shewanella loihica (strain ATCC BAA-1088 / PV-4).